Here is a 532-residue protein sequence, read N- to C-terminus: Probable cytochrome c oxidase subunit 1 (532 aa).

8 helical membrane passes run 33–53 (IMYIIFAVFAGIVGGLFSLLF), 74–94 (VLITAHAVIMVFFMIMPALFG), 95–115 (GFGNYFVPLLIGAPDMAFPRL), 118–138 (ISFWLLVPAFLLLMGSAFVDG), 163–183 (MAIFSLHLTGLSSILGSINLI), 200–220 (PLFVWSILVTAFLIILAMPVL), 252–272 (LFWFFGHPEVYIVILPGFGIV), and 284–304 (IFGYQGMIGAMVIIGFVGFIV). Histidine 79 is a binding site for Fe(II)-heme a. Positions 258 and 262 each coordinate Cu cation. Cu cation is bound by residues histidine 307 and histidine 308. Helical transmembrane passes span 318-338 (ALIYFTAGTMIIAVPTGIKIF) and 355-375 (MLFSIGFIILFTIGGVTGIIL). Residue histidine 393 participates in heme a3 binding. 3 helical membrane passes run 394-414 (FHYTMSLGALFTAFAGFYYWF), 431-451 (FWITFIGVNLTFFPQHFLGLA), and 473-493 (IGAGISMFAALYFVFIVFYTL). A Fe(II)-heme a-binding site is contributed by histidine 395.

It belongs to the heme-copper respiratory oxidase family.

It localises to the cell membrane. It catalyses the reaction 4 Fe(II)-[cytochrome c] + O2 + 8 H(+)(in) = 4 Fe(III)-[cytochrome c] + 2 H2O + 4 H(+)(out). Its pathway is energy metabolism; oxidative phosphorylation. Cytochrome c oxidase is the component of the respiratory chain that catalyzes the reduction of oxygen to water. Subunits 1-3 form the functional core of the enzyme complex. CO I is the catalytic subunit of the enzyme. Electrons originating in cytochrome c are transferred via the copper A center of subunit 2 and heme A of subunit 1 to the bimetallic center formed by heme A3 and copper B. The chain is Probable cytochrome c oxidase subunit 1 (ctaD) from Rickettsia conorii (strain ATCC VR-613 / Malish 7).